A 270-amino-acid polypeptide reads, in one-letter code: Putative hydro-lyase ACIAD2519 (270 aa).

This sequence belongs to the D-glutamate cyclase family.

The sequence is that of Putative hydro-lyase ACIAD2519 from Acinetobacter baylyi (strain ATCC 33305 / BD413 / ADP1).